The chain runs to 119 residues: Ribosome-binding factor A (119 aa).

The protein belongs to the RbfA family. Monomer. Binds 30S ribosomal subunits, but not 50S ribosomal subunits or 70S ribosomes.

It is found in the cytoplasm. One of several proteins that assist in the late maturation steps of the functional core of the 30S ribosomal subunit. Associates with free 30S ribosomal subunits (but not with 30S subunits that are part of 70S ribosomes or polysomes). Required for efficient processing of 16S rRNA. May interact with the 5'-terminal helix region of 16S rRNA. The chain is Ribosome-binding factor A from Chlorobium luteolum (strain DSM 273 / BCRC 81028 / 2530) (Pelodictyon luteolum).